A 245-amino-acid polypeptide reads, in one-letter code: Type II restriction enzyme EcoRV (245 aa).

3 residues coordinate Mg(2+): Glu-45, Asp-74, and Asp-90. Catalysis depends on residues Asp-74, Asp-90, and Lys-92.

As to quaternary structure, homodimer. The cofactor is Mg(2+).

It carries out the reaction Endonucleolytic cleavage of DNA to give specific double-stranded fragments with terminal 5'-phosphates.. In terms of biological role, a P subtype restriction enzyme that recognizes the double-stranded sequence 5'-GATATC-3' and cleaves after T-3. This Escherichia coli protein is Type II restriction enzyme EcoRV (ecoRVR).